The sequence spans 106 residues: Nucleoid-associated protein Rpal_0620 (106 aa).

This sequence belongs to the YbaB/EbfC family. In terms of assembly, homodimer.

The protein resides in the cytoplasm. It is found in the nucleoid. Functionally, binds to DNA and alters its conformation. May be involved in regulation of gene expression, nucleoid organization and DNA protection. The chain is Nucleoid-associated protein Rpal_0620 from Rhodopseudomonas palustris (strain TIE-1).